Here is a 324-residue protein sequence, read N- to C-terminus: Elongation factor P--(R)-beta-lysine ligase (324 aa).

75 to 77 (SPE) contacts substrate. Residues 99 to 101 (RNK) and N108 each bind ATP. Residue Y117 coordinates substrate. 243 to 244 (EL) contributes to the ATP binding site. Position 250 (E250) interacts with substrate. G299 serves as a coordination point for ATP.

It belongs to the class-II aminoacyl-tRNA synthetase family. EpmA subfamily. Homodimer.

The enzyme catalyses D-beta-lysine + L-lysyl-[protein] + ATP = N(6)-((3R)-3,6-diaminohexanoyl)-L-lysyl-[protein] + AMP + diphosphate + H(+). Its function is as follows. With EpmB is involved in the beta-lysylation step of the post-translational modification of translation elongation factor P (EF-P). Catalyzes the ATP-dependent activation of (R)-beta-lysine produced by EpmB, forming a lysyl-adenylate, from which the beta-lysyl moiety is then transferred to the epsilon-amino group of a conserved specific lysine residue in EF-P. The chain is Elongation factor P--(R)-beta-lysine ligase from Buchnera aphidicola subsp. Acyrthosiphon pisum (strain 5A).